The following is a 410-amino-acid chain: Acyl-CoA-binding domain-containing protein 5-B (410 aa).

Positions 12–101 constitute an ACB domain; sequence AQKRFEAAVK…IQLIIETLPV (90 aa). An acyl-CoA-binding positions include 23–32, 43–47, Lys-69, and Tyr-88; these read IRSLPEDGSY and YSYYK. The segment covering 119–128 has biased composition (acidic residues); the sequence is VEDDDDDDDE. Disordered stretches follow at residues 119 to 165, 221 to 242, and 254 to 320; these read VEDD…LDDY, SDDE…GSGV, and GANM…DRMD. A coiled-coil region spans residues 326-355; that stretch reads TQITTILSELEDNMQDVLRRLTTLEQLTAS. Residues 382–404 are membrane-embedded; the sequence is SPFTAVLTVLWPFAVHWLVQFYL.

The protein resides in the membrane. Functionally, binds medium- and long-chain acyl-CoA esters. This Danio rerio (Zebrafish) protein is Acyl-CoA-binding domain-containing protein 5-B (acbd5b).